Here is a 230-residue protein sequence, read N- to C-terminus: UPF0173 metal-dependent hydrolase Rsph17025_2229 (230 aa).

The protein belongs to the UPF0173 family.

The polypeptide is UPF0173 metal-dependent hydrolase Rsph17025_2229 (Cereibacter sphaeroides (strain ATCC 17025 / ATH 2.4.3) (Rhodobacter sphaeroides)).